The following is a 267-amino-acid chain: 4-hydroxy-tetrahydrodipicolinate reductase (267 aa).

NAD(+) is bound by residues 8–13 (GAAGRM) and Glu-34. Arg-35 contacts NADP(+). NAD(+) is bound by residues 98 to 100 (GST) and 122 to 125 (APNM). Catalysis depends on His-155, which acts as the Proton donor/acceptor. His-156 serves as a coordination point for (S)-2,3,4,5-tetrahydrodipicolinate. The Proton donor role is filled by Lys-159. Residue 165–166 (GT) coordinates (S)-2,3,4,5-tetrahydrodipicolinate.

The protein belongs to the DapB family.

It localises to the cytoplasm. It carries out the reaction (S)-2,3,4,5-tetrahydrodipicolinate + NAD(+) + H2O = (2S,4S)-4-hydroxy-2,3,4,5-tetrahydrodipicolinate + NADH + H(+). It catalyses the reaction (S)-2,3,4,5-tetrahydrodipicolinate + NADP(+) + H2O = (2S,4S)-4-hydroxy-2,3,4,5-tetrahydrodipicolinate + NADPH + H(+). Its pathway is amino-acid biosynthesis; L-lysine biosynthesis via DAP pathway; (S)-tetrahydrodipicolinate from L-aspartate: step 4/4. Catalyzes the conversion of 4-hydroxy-tetrahydrodipicolinate (HTPA) to tetrahydrodipicolinate. The chain is 4-hydroxy-tetrahydrodipicolinate reductase from Pelobacter propionicus (strain DSM 2379 / NBRC 103807 / OttBd1).